The following is a 190-amino-acid chain: GTP cyclohydrolase 1 (190 aa).

Zn(2+)-binding residues include cysteine 75, histidine 78, and cysteine 146.

Belongs to the GTP cyclohydrolase I family. Toroid-shaped homodecamer, composed of two pentamers of five dimers.

It carries out the reaction GTP + H2O = 7,8-dihydroneopterin 3'-triphosphate + formate + H(+). The protein operates within cofactor biosynthesis; 7,8-dihydroneopterin triphosphate biosynthesis; 7,8-dihydroneopterin triphosphate from GTP: step 1/1. The polypeptide is GTP cyclohydrolase 1 (Campylobacter jejuni subsp. doylei (strain ATCC BAA-1458 / RM4099 / 269.97)).